We begin with the raw amino-acid sequence, 302 residues long: uncharacterized protein (302 aa).

A run of 9 helical transmembrane segments spans residues V10–G30, L65–L85, V102–G122, I130–I150, A162–L182, I190–L210, L224–L244, F251–I271, and S282–L302.

The protein belongs to the auxin efflux carrier (TC 2.A.69) family.

It localises to the cell membrane. This is an uncharacterized protein from Methanothermobacter thermautotrophicus (strain ATCC 29096 / DSM 1053 / JCM 10044 / NBRC 100330 / Delta H) (Methanobacterium thermoautotrophicum).